The following is a 417-amino-acid chain: Serine hydroxymethyltransferase (417 aa).

(6S)-5,6,7,8-tetrahydrofolate contacts are provided by residues Leu120 and 124-126; that span reads GHL. Lys229 is subject to N6-(pyridoxal phosphate)lysine. A (6S)-5,6,7,8-tetrahydrofolate-binding site is contributed by 354-356; it reads SPF.

Belongs to the SHMT family. Homodimer. It depends on pyridoxal 5'-phosphate as a cofactor.

Its subcellular location is the cytoplasm. It carries out the reaction (6R)-5,10-methylene-5,6,7,8-tetrahydrofolate + glycine + H2O = (6S)-5,6,7,8-tetrahydrofolate + L-serine. It functions in the pathway one-carbon metabolism; tetrahydrofolate interconversion. Its pathway is amino-acid biosynthesis; glycine biosynthesis; glycine from L-serine: step 1/1. Functionally, catalyzes the reversible interconversion of serine and glycine with tetrahydrofolate (THF) serving as the one-carbon carrier. This reaction serves as the major source of one-carbon groups required for the biosynthesis of purines, thymidylate, methionine, and other important biomolecules. Also exhibits THF-independent aldolase activity toward beta-hydroxyamino acids, producing glycine and aldehydes, via a retro-aldol mechanism. The chain is Serine hydroxymethyltransferase from Acinetobacter radioresistens.